We begin with the raw amino-acid sequence, 437 residues long: Keratin, type I cytoskeletal 13 (437 aa).

The interval 1 to 95 (MSCRFQSSSM…GVDGGLLSGN (95 aa)) is head. 2 positions are modified to omega-N-methylarginine: R27 and R35. The interval 96–131 (EKITMQNLNDRLASYLDKVRALEAANADLEVKIRDW) is coil 1A. Positions 96–408 (EKITMQNLND…SLLEGQDAKM (313 aa)) constitute an IF rod domain. Positions 132–150 (HLKQSPASPERDYSAYYKT) are linker 1. A coil 1B region spans residues 151 to 242 (IEELRIKILE…KNHEEEMKEF (92 aa)). A linker 12 region spans residues 243–265 (SNQVVGQVNVEMDATPGIDLTRV). The interval 266-404 (LAEMREQYEA…ATYRSLLEGQ (139 aa)) is coil 2. The tail stretch occupies residues 405 to 437 (DAKMTGFNSGGNNTTTSNGSPSSNSGRPDFRKY). Residues 408-437 (MTGFNSGGNNTTTSNGSPSSNSGRPDFRKY) form a disordered region. The span at 409–430 (TGFNSGGNNTTTSNGSPSSNSG) shows a compositional bias: low complexity.

It belongs to the intermediate filament family. In terms of assembly, heterotetramer of two type I and two type II keratins. Post-translationally, O-glycosylated; glycans consist of single N-acetylglucosamine residues. In terms of tissue distribution, expressed in tongue epithelia (at protein level). Expressed in upper suprabasal layers of the corneal epithelium (at protein level).

Its function is as follows. Type 1 keratin. Maintains postnatal tongue mucosal cell homeostasis and tissue organization in response to mechanical stress, potentially via regulation of the G1/S phase cyclins CCNE1 and CCNE2. The sequence is that of Keratin, type I cytoskeletal 13 (Krt13) from Mus musculus (Mouse).